We begin with the raw amino-acid sequence, 174 residues long: Transcriptional repressor NrdR (174 aa).

The segment at 3 to 34 is a zinc-finger region; sequence CPFCQHNDTRVIDSRVSEDGTTIRRRRECEAC. Positions 49 to 139 constitute an ATP-cone domain; it reads PTVVKSDGGR…VYRSFQDVAD (91 aa).

The protein belongs to the NrdR family. Requires Zn(2+) as cofactor.

Negatively regulates transcription of bacterial ribonucleotide reductase nrd genes and operons by binding to NrdR-boxes. The sequence is that of Transcriptional repressor NrdR from Xanthomonas axonopodis pv. citri (strain 306).